The primary structure comprises 297 residues: Nitrogenase iron protein 2 (297 aa).

14 to 21 contributes to the ATP binding site; that stretch reads GKGGIGKS. Cysteine 102 is a binding site for [4Fe-4S] cluster. Arginine 105 is modified (ADP-ribosylarginine; by dinitrogenase reductase ADP-ribosyltransferase). Cysteine 136 lines the [4Fe-4S] cluster pocket.

The protein belongs to the NifH/BchL/ChlL family. Homodimer. [4Fe-4S] cluster is required as a cofactor. The reversible ADP-ribosylation of Arg-105 inactivates the nitrogenase reductase and regulates nitrogenase activity.

The catalysed reaction is N2 + 8 reduced [2Fe-2S]-[ferredoxin] + 16 ATP + 16 H2O = H2 + 8 oxidized [2Fe-2S]-[ferredoxin] + 2 NH4(+) + 16 ADP + 16 phosphate + 6 H(+). In terms of biological role, the key enzymatic reactions in nitrogen fixation are catalyzed by the nitrogenase complex, which has 2 components: the iron protein and the molybdenum-iron protein. This is Nitrogenase iron protein 2 (nifH2) from Nostoc sp. (strain PCC 7120 / SAG 25.82 / UTEX 2576).